The chain runs to 225 residues: Isoprenyl transferase 1 (225 aa).

The active site involves aspartate 3. Residue aspartate 3 participates in Mg(2+) binding. Substrate contacts are provided by residues 4–7 (GNRR), tryptophan 8, histidine 21, and 49–51 (SME). Asparagine 52 (proton acceptor) is an active-site residue. Residues arginine 55, arginine 174, and 180 to 182 (RLS) each bind substrate. Position 193 (glutamate 193) interacts with Mg(2+).

It belongs to the UPP synthase family. Homodimer. The cofactor is Mg(2+).

Its function is as follows. Catalyzes the condensation of isopentenyl diphosphate (IPP) with allylic pyrophosphates generating different type of terpenoids. This is Isoprenyl transferase 1 from Corynebacterium glutamicum (strain ATCC 13032 / DSM 20300 / JCM 1318 / BCRC 11384 / CCUG 27702 / LMG 3730 / NBRC 12168 / NCIMB 10025 / NRRL B-2784 / 534).